We begin with the raw amino-acid sequence, 386 residues long: Patatin group M-1 (386 aa).

Residues 1 to 23 (MATTKSFLILFFMILATTSSTCA) form the signal peptide. The region spanning 32-229 (LSIDGGGIKG…TVGDPALLSL (198 aa)) is the PNPLA domain. A GXGXXG motif is present at residues 36–41 (GGGIKG). Residues 75-79 (GTSTG) carry the GXSXG motif. Residue S77 is the Nucleophile of the active site. An N-linked (GlcNAc...) asparagine glycan is attached at N115. Catalysis depends on D215, which acts as the Proton acceptor. A DGA/G motif is present at residues 215-217 (DGG).

It belongs to the patatin family. In terms of tissue distribution, tuber.

The protein resides in the vacuole. Its function is as follows. Probable lipolytic acyl hydrolase (LAH), an activity which is thought to be involved in the response of tubers to pathogens. This is Patatin group M-1 from Solanum tuberosum (Potato).